Consider the following 740-residue polypeptide: 1,4-alpha-glucan branching enzyme GlgB (740 aa).

Asp-419 (nucleophile) is an active-site residue. The active-site Proton donor is Glu-472.

It belongs to the glycosyl hydrolase 13 family. GlgB subfamily. As to quaternary structure, monomer.

The catalysed reaction is Transfers a segment of a (1-&gt;4)-alpha-D-glucan chain to a primary hydroxy group in a similar glucan chain.. It participates in glycan biosynthesis; glycogen biosynthesis. Functionally, catalyzes the formation of the alpha-1,6-glucosidic linkages in glycogen by scission of a 1,4-alpha-linked oligosaccharide from growing alpha-1,4-glucan chains and the subsequent attachment of the oligosaccharide to the alpha-1,6 position. This is 1,4-alpha-glucan branching enzyme GlgB from Thiobacillus denitrificans (strain ATCC 25259 / T1).